We begin with the raw amino-acid sequence, 145 residues long: Neuromedin-S (145 aa).

The signal sequence occupies residues 1-27; that stretch reads MRSEKHLLPLPLLLAICCLGTLHLSSG. 2 propeptides span residues 28–89 and 92–117; these read FPQS…HEIY and FLFQ…AEYT. The residue at position 136 (N136) is an Asparagine amide. A propeptide spanning residues 140–145 is cleaved from the precursor; it reads VSINEH.

It belongs to the NmU family. As to expression, expressed by the skin glands.

The protein resides in the secreted. In terms of biological role, stimulates uterine smooth muscle contraction (EC(50)=1.6 nM). Synthetic peptide NmS-17 induces calcium mobilization in CHO cells transfected with either human FM-3/GPR66 (EC(50)=0.085 nM) or FM-4/TGR-1 (EC(50)=0.231 nM) NmU/NmS receptors. This chain is Neuromedin-S (nms), found in Bombina maxima (Giant fire-bellied toad).